The chain runs to 1376 residues: MDTSSVGTLELTDQTPVLLGSTAMATSLTNVGNSFSGPPNPLVSRSSKFQNSSVEDDDDVVFIEPVQPPPSSAPLVADQRPITFTSSKNEELQGNDPKILPSSKELAPQKGSVSETIVIDDEEDMETNQGQEKSSSNFIERRPSETKNRTNDVDFSSSTFSRSKVNAGVSNSGITTEPDSEIQIANVTTLETGVSSVSDGQLESTDGRDMNLMITHVTSLHNTSLGDGSNGLQSSNFGVNIQTYTPSLTSQTKAGVGPFNPGRMNVAGDVFQNGESAPHHNPDSWISQSASFPRNQKQQGVDSLSPVASLPKQIFQPSNQQPTKPVKVTCANCKKPLQKGQTAYQRKGSAHLFCSTTCLSSFSHKPAPKKLCVMCKKDITTMKGTIVAQVDSSESFQEFCSTSCLSLYEDKQSPAKGALNKSRCTICGKLTEIRHEVSFKNMTHKLCSDHCFNRYRMANGLIMNCCEQCGEYLPSKGAGNNVLVVDGQQKRFCCQSCVTEYKQVGSHPSFLKEVRDHMQDSFLMQPEKYGKLTTCTGCRTQCRFFDMTQCIGPNGYMEPYCSTACMNSHKTKYAKSQSLGIICHFCKRNSLPQYQATMPDGKLYNFCNSSCVAKFQALSMQSSPNGQFVAPSDIQLKCNYCKNSFCSKPEILEWENKVHQFCSKTCSDDYKKLHCIVTYCEYCQEEKTLHETVNFSGVKRPFCSEGCKLLYKQDFARRLGLRCVTCNYCSQLCKKGATKELDGVVRDFCSEDCCKKFQEWYYKAARCDCCKSQGTLKERVQWRGEMKHFCDQHCLLRFYCQQNEPNMTTQKGPENLHYDQGCQTSRTKMTGSAPPPSPTPNKEMKNKAILCKPLTMTKATYCKPHMQTKSCQTDENWKTEYVPVPIPVPVYVPVPMHMYSQNIPVPTTVPVPVPVPVFLPAPLDSSEKIPATVEDLKSKVSSDPLDSELLTMTDMMTEEEGKAEASNINSVIIETDIIGSDLTKNSDPDIQSNMPDVPYEPDLDIEIDFPRAAEELDMENEFLLPPVFGEEYEEQPRPRSKKKGTKRKAVSGYQSHDDSSDNSECSFPFKYTYGVNAWKHWVKTRQLDEDLLVLDELKSSKSVKLKEDLLSHTTAELNYGLAHFVNEIRRPNGENYAPDSIYYLCLGIQEYLCGSNRKDNIFIDPGYQMFEQELNKILRSWQPSILPDGSIFSRVEEDYLWRIKQLGSHSPVALLNTLFYFNTKYFGLKTVEQHLRLSFGTVFRHWKKNPLTMENKACLRYQVSSLCGTDNEDKIATGKRKHEDDEPVFEQVENTANPSRCPVKMFECYLSKSPQNLNQRMDVFYLQPECSSSTDSPVWYTSTSLDRNTLENMLVRVLLVKDIYDKDNYELDEDTD.

The segment covering 30-53 has biased composition (polar residues); that stretch reads NVGNSFSGPPNPLVSRSSKFQNSS. 2 disordered regions span residues 30–56 and 85–158; these read NVGN…SVED and TSSK…FSSS. Glycyl lysine isopeptide (Lys-Gly) (interchain with G-Cter in SUMO2) cross-links involve residues Lys48, Lys88, Lys98, and Lys104. Residues 127-138 are compositionally biased toward polar residues; the sequence is TNQGQEKSSSNF. The span at 139-152 shows a compositional bias: basic and acidic residues; it reads IERRPSETKNRTND. Glycyl lysine isopeptide (Lys-Gly) (interchain with G-Cter in SUMO2) cross-links involve residues Lys147, Lys253, and Lys297. The interval 269–304 is disordered; the sequence is DVFQNGESAPHHNPDSWISQSASFPRNQKQQGVDSL. A compositionally biased stretch (polar residues) spans 284–302; sequence SWISQSASFPRNQKQQGVD. Ser305 bears the Phosphoserine mark. Residues Lys312, Lys324, Lys347, and Lys365 each participate in a glycyl lysine isopeptide (Lys-Gly) (interchain with G-Cter in SUMO2) cross-link. Residues 326–362 form an MYM-type 1 zinc finger; sequence VKVTCANCKKPLQKGQTAYQRKGSAHLFCSTTCLSSF. An MYM-type 2 zinc finger spans residues 368–408; that stretch reads PKKLCVMCKKDITTMKGTIVAQVDSSESFQEFCSTSCLSLY. Glycyl lysine isopeptide (Lys-Gly) (interchain with G-Cter in SUMO2) cross-links involve residues Lys416, Lys440, Lys490, Lys502, Lys512, Lys528, and Lys531. MYM-type zinc fingers lie at residues 420 to 455 and 462 to 501; these read NKSR…FNRY and IMNC…VTEY. The MYM-type 5 zinc-finger motif lies at 532 to 569; the sequence is LTTCTGCRTQCRFFDMTQCIGPNGYMEPYCSTACMNSH. Glycyl lysine isopeptide (Lys-Gly) (interchain with G-Cter in SUMO2) cross-links involve residues Lys575, Lys602, Lys648, Lys657, Lys687, Lys699, and Lys708. The MYM-type 6 zinc finger occupies 635–670; the sequence is QLKCNYCKNSFCSKPEILEWENKVHQFCSKTCSDDY. 2 consecutive MYM-type zinc fingers follow at residues 722 to 757 and 763 to 798; these read RCVT…CKKF and KAAR…LLRF. Residues Lys763, Lys787, Lys811, and Lys828 each participate in a glycyl lysine isopeptide (Lys-Gly) (interchain with G-Cter in SUMO2) cross-link. Phosphoserine is present on Ser837. Residues 1027-1063 form a disordered region; the sequence is VFGEEYEEQPRPRSKKKGTKRKAVSGYQSHDDSSDNS. Residues 1038-1049 show a composition bias toward basic residues; it reads PRSKKKGTKRKA. Position 1063 is a phosphoserine (Ser1063). A Phosphothreonine modification is found at Thr1375.

Can form homodimers. May be a component of a BHC histone deacetylase complex that contains HDAC1, HDAC2, HMG20B/BRAF35, KDM1A, RCOR1/CoREST, PHF21A/BHC80, ZMYM2, ZNF217, ZMYM3, GSE1 and GTF2I. Interacts with FOXP1 and FOXP2. As to expression, low but widespread expression is detected in the developing kidney.

The protein resides in the nucleus. Involved in the negative regulation of transcription. The chain is Zinc finger MYM-type protein 2 (Zmym2) from Mus musculus (Mouse).